A 416-amino-acid chain; its full sequence is MAYFLEQTDSEIFELIFEEYKRQNEHLEMIASENYTFPSVMEAMGSILTNKYAEGYPNKRYYGGCEVVDKIESLAIERAKKLFNCQFANVQAHSGSQANNAVYHALLKPYDKILGMDLSCGGHLTHGAKVSLTGKHYQSFSYGVNLDGYIDYEEALKIAQSVKPEIIVCGFSAYPREIDFKKFREIADEVGALLLGDIAHVAGLVVTNEHAHPFPHCHVVSSTTHKTLRGPRGGIILTNDEEIAAKIDKAIFPGTQGGPLMHVIAAKAVGFKENLKPEFKAYAKLVKSNMQVLAKALKEKNHKLVSGGTSNHLLLMDFLDKPYSGKDADIALGNAGITVNKNTIPGETRSPFVTSGIRIGSAALSARGMGAKEFEIIGNKISDILNDINNVSLQLHVKEELKAMANQFPVYQQPIF.

Residues leucine 118 and 122–124 (GHL) each bind (6S)-5,6,7,8-tetrahydrofolate. Lysine 226 is subject to N6-(pyridoxal phosphate)lysine. (6S)-5,6,7,8-tetrahydrofolate contacts are provided by residues glutamate 242 and 350–352 (SPF).

It belongs to the SHMT family. Homodimer. Requires pyridoxal 5'-phosphate as cofactor.

It is found in the cytoplasm. It carries out the reaction (6R)-5,10-methylene-5,6,7,8-tetrahydrofolate + glycine + H2O = (6S)-5,6,7,8-tetrahydrofolate + L-serine. The protein operates within one-carbon metabolism; tetrahydrofolate interconversion. Its pathway is amino-acid biosynthesis; glycine biosynthesis; glycine from L-serine: step 1/1. Functionally, catalyzes the reversible interconversion of serine and glycine with tetrahydrofolate (THF) serving as the one-carbon carrier. This reaction serves as the major source of one-carbon groups required for the biosynthesis of purines, thymidylate, methionine, and other important biomolecules. Also exhibits THF-independent aldolase activity toward beta-hydroxyamino acids, producing glycine and aldehydes, via a retro-aldol mechanism. The chain is Serine hydroxymethyltransferase from Helicobacter pylori (strain G27).